The chain runs to 569 residues: Urease subunit alpha (569 aa).

Residues 131 to 569 enclose the Urease domain; that stretch reads GGIDAHIHFI…VPMAQRYFLF (439 aa). Ni(2+)-binding residues include H136, H138, and K219. N6-carboxylysine is present on K219. A substrate-binding site is contributed by H221. H248 and H274 together coordinate Ni(2+). Residue H322 is the Proton donor of the active site. Ni(2+) is bound at residue D362.

It belongs to the metallo-dependent hydrolases superfamily. Urease alpha subunit family. As to quaternary structure, heterotrimer of UreA (gamma), UreB (beta) and UreC (alpha) subunits. Three heterotrimers associate to form the active enzyme. Ni cation is required as a cofactor. Post-translationally, carboxylation allows a single lysine to coordinate two nickel ions.

The protein resides in the cytoplasm. It carries out the reaction urea + 2 H2O + H(+) = hydrogencarbonate + 2 NH4(+). The protein operates within nitrogen metabolism; urea degradation; CO(2) and NH(3) from urea (urease route): step 1/1. The protein is Urease subunit alpha of Bacillus sp. (strain TB-90).